Reading from the N-terminus, the 448-residue chain is Trigger factor (448 aa).

The PPIase FKBP-type domain occupies 162–243; the sequence is DDFAIIDIEA…VQQTKERKLP (82 aa). A disordered region spans residues 426-448; that stretch reads DEGKAVDPSEYFGEEEESAEESE. A compositionally biased stretch (acidic residues) spans 437–448; sequence FGEEEESAEESE.

The protein belongs to the FKBP-type PPIase family. Tig subfamily.

It is found in the cytoplasm. It carries out the reaction [protein]-peptidylproline (omega=180) = [protein]-peptidylproline (omega=0). Its function is as follows. Involved in protein export. Acts as a chaperone by maintaining the newly synthesized protein in an open conformation. Functions as a peptidyl-prolyl cis-trans isomerase. The protein is Trigger factor of Corynebacterium diphtheriae (strain ATCC 700971 / NCTC 13129 / Biotype gravis).